A 74-amino-acid polypeptide reads, in one-letter code: MLVFYALLFVSVFSNTVMGATIDMPIPKPILREAIEEIDVNKRADSHYCKEENCPPGKHCPKVPIVCRRGPCCF.

An N-terminal signal peptide occupies residues 1-19 (MLVFYALLFVSVFSNTVMG). The propeptide occupies 20-41 (ATIDMPIPKPILREAIEEIDVN).

This sequence belongs to the scoloptoxin-07 family. Post-translationally, contains 3 disulfide bonds. As to expression, expressed by the venom gland.

Its subcellular location is the secreted. Inhibits voltage-gated potassium channels. The sequence is that of Kappa-scoloptoxin(07)-Ssm2e from Scolopendra mutilans (Chinese red-headed centipede).